A 580-amino-acid polypeptide reads, in one-letter code: Aspartate--tRNA ligase (580 aa).

Glu173 lines the L-aspartate pocket. The interval 195 to 198 (QIYK) is aspartate. Residue Arg217 participates in L-aspartate binding. ATP is bound by residues 217 to 219 (RDE) and Gln226. His443 is an L-aspartate binding site. Residue Glu477 participates in ATP binding. Arg484 provides a ligand contact to L-aspartate. 529-532 (GIER) provides a ligand contact to ATP.

This sequence belongs to the class-II aminoacyl-tRNA synthetase family. Type 1 subfamily. As to quaternary structure, homodimer.

It is found in the cytoplasm. The catalysed reaction is tRNA(Asp) + L-aspartate + ATP = L-aspartyl-tRNA(Asp) + AMP + diphosphate. Its function is as follows. Catalyzes the attachment of L-aspartate to tRNA(Asp) in a two-step reaction: L-aspartate is first activated by ATP to form Asp-AMP and then transferred to the acceptor end of tRNA(Asp). The polypeptide is Aspartate--tRNA ligase (Malacoplasma penetrans (strain HF-2) (Mycoplasma penetrans)).